We begin with the raw amino-acid sequence, 206 residues long: Protein-methionine-sulfoxide reductase heme-binding subunit MsrQ (206 aa).

Transmembrane regions (helical) follow at residues 10–30 (VFIAAAVWPLFWLYEAWSAVL), 42–62 (LGLGTLILLLITLAMTPLQKL), 75–95 (LGLWCFAYVVLHLAAYCVFVL), 110–130 (PYIIVGALGFLLLLVLAVTSN), 147–167 (LVYVVLGLGLLHMLWIVRADL), and 169–189 (EWAIYASIGALLLVLRIPPVM).

Belongs to the MsrQ family. Heterodimer of a catalytic subunit (MsrP) and a heme-binding subunit (MsrQ). Requires FMN as cofactor. It depends on heme b as a cofactor.

It is found in the cell inner membrane. Functionally, part of the MsrPQ system that repairs oxidized periplasmic proteins containing methionine sulfoxide residues (Met-O), using respiratory chain electrons. Thus protects these proteins from oxidative-stress damage caused by reactive species of oxygen and chlorine generated by the host defense mechanisms. MsrPQ is essential for the maintenance of envelope integrity under bleach stress, rescuing a wide series of structurally unrelated periplasmic proteins from methionine oxidation. MsrQ provides electrons for reduction to the reductase catalytic subunit MsrP, using the quinone pool of the respiratory chain. In Pseudomonas fluorescens (strain SBW25), this protein is Protein-methionine-sulfoxide reductase heme-binding subunit MsrQ.